The primary structure comprises 238 residues: 7-cyano-7-deazaguanine synthase 1 (238 aa).

Phe14–Leu24 provides a ligand contact to ATP. The Zn(2+) site is built by Cys202, Cys217, Cys220, and Cys223.

It belongs to the QueC family. It depends on Zn(2+) as a cofactor.

The catalysed reaction is 7-carboxy-7-deazaguanine + NH4(+) + ATP = 7-cyano-7-deazaguanine + ADP + phosphate + H2O + H(+). It functions in the pathway purine metabolism; 7-cyano-7-deazaguanine biosynthesis. Its function is as follows. Catalyzes the ATP-dependent conversion of 7-carboxy-7-deazaguanine (CDG) to 7-cyano-7-deazaguanine (preQ(0)). The polypeptide is 7-cyano-7-deazaguanine synthase 1 (Rhodopseudomonas palustris (strain HaA2)).